Consider the following 185-residue polypeptide: Ribosome-recycling factor (185 aa).

The protein belongs to the RRF family.

It is found in the cytoplasm. In terms of biological role, responsible for the release of ribosomes from messenger RNA at the termination of protein biosynthesis. May increase the efficiency of translation by recycling ribosomes from one round of translation to another. In Thermomicrobium roseum (strain ATCC 27502 / DSM 5159 / P-2), this protein is Ribosome-recycling factor.